The chain runs to 286 residues: ATP synthase gamma chain (286 aa).

This sequence belongs to the ATPase gamma chain family. As to quaternary structure, F-type ATPases have 2 components, CF(1) - the catalytic core - and CF(0) - the membrane proton channel. CF(1) has five subunits: alpha(3), beta(3), gamma(1), delta(1), epsilon(1). CF(0) has three main subunits: a, b and c.

Its subcellular location is the cell membrane. In terms of biological role, produces ATP from ADP in the presence of a proton gradient across the membrane. The gamma chain is believed to be important in regulating ATPase activity and the flow of protons through the CF(0) complex. The polypeptide is ATP synthase gamma chain (Ureaplasma urealyticum serovar 10 (strain ATCC 33699 / Western)).